A 398-amino-acid polypeptide reads, in one-letter code: 1-deoxy-D-xylulose 5-phosphate reductoisomerase (398 aa).

Residues Thr10, Gly11, Ser12, Ile13, Asn38, and Asn124 each contribute to the NADPH site. 1-deoxy-D-xylulose 5-phosphate is bound at residue Lys125. Glu126 serves as a coordination point for NADPH. Asp150 contacts Mn(2+). 1-deoxy-D-xylulose 5-phosphate is bound by residues Ser151, Glu152, Ser186, and His209. Glu152 lines the Mn(2+) pocket. Gly215 is a binding site for NADPH. The 1-deoxy-D-xylulose 5-phosphate site is built by Ser222, Asn227, Lys228, and Glu231. Residue Glu231 participates in Mn(2+) binding.

This sequence belongs to the DXR family. It depends on Mg(2+) as a cofactor. The cofactor is Mn(2+).

The catalysed reaction is 2-C-methyl-D-erythritol 4-phosphate + NADP(+) = 1-deoxy-D-xylulose 5-phosphate + NADPH + H(+). It participates in isoprenoid biosynthesis; isopentenyl diphosphate biosynthesis via DXP pathway; isopentenyl diphosphate from 1-deoxy-D-xylulose 5-phosphate: step 1/6. Functionally, catalyzes the NADPH-dependent rearrangement and reduction of 1-deoxy-D-xylulose-5-phosphate (DXP) to 2-C-methyl-D-erythritol 4-phosphate (MEP). The sequence is that of 1-deoxy-D-xylulose 5-phosphate reductoisomerase from Baumannia cicadellinicola subsp. Homalodisca coagulata.